The primary structure comprises 497 residues: MORN repeat-containing protein 1 (497 aa).

The interval 1–27 (MAAAGEGTPSSRGPRRDPPRRPPRNGY) is disordered. 7 MORN repeats span residues 39–61 (YEGE…DGSY), 62–84 (YEGA…WSGD), 86–108 (FSGQ…AGGC), 109–131 (YEGE…DGQV), 132–154 (YQGS…NGDK), 155–177 (YDGD…DGST), and 178–200 (YKGQ…SGVT). Disordered regions lie at residues 393–425 (GGRS…ATEE) and 468–497 (QPPH…PAPR).

The chain is MORN repeat-containing protein 1 (MORN1) from Homo sapiens (Human).